A 903-amino-acid chain; its full sequence is uncharacterized protein (903 aa).

This is an uncharacterized protein from Gallid herpesvirus 2 (strain Chicken/Md5/ATCC VR-987) (GaHV-2).